The following is a 172-amino-acid chain: Large ribosomal subunit protein uL10 (172 aa).

Belongs to the universal ribosomal protein uL10 family. Part of the ribosomal stalk of the 50S ribosomal subunit. The N-terminus interacts with L11 and the large rRNA to form the base of the stalk. The C-terminus forms an elongated spine to which L12 dimers bind in a sequential fashion forming a multimeric L10(L12)X complex.

Forms part of the ribosomal stalk, playing a central role in the interaction of the ribosome with GTP-bound translation factors. The sequence is that of Large ribosomal subunit protein uL10 from Bartonella tribocorum (strain CIP 105476 / IBS 506).